The primary structure comprises 379 residues: MSALRPPARGGLGLSRLGVRLAGSRRFQLIAERVPFLRRIGRREGEELFDIVAGFVHSQVLYALVELRVLHLVAEGPQTVQALAAATGLAPERMQLLLQGGAALKLLTRRRDGQFDLAVRGAAFLAVPGLEAMVGHHHVLYRDLADPVAFLKGETEPELARFWPYVFGAGGATDPEVTAKYSRLMTESQGLVAEDALRLVDLMGVRRLMDVGGGTGAFLAAVGRAYPLMELMLFDLPVVAEAAPQRLTEAGLAGRFTVHGGSFRDDPLPLGADAISLVRVLFDHSDETVKLLLHRVREALPAGGRVIVAEAMSGGARPHRETDTYMAFYTAAMRTGRVRSAAEIAELLTGQGFSEIKIFPGLRPYVASAVTAVRPSDAP.

The S-adenosyl-L-methionine site is built by Asp-235 and Arg-279.

This sequence belongs to the class I-like SAM-binding methyltransferase superfamily. Cation-independent O-methyltransferase family.

The enzyme catalyses demethylspheroidene + S-adenosyl-L-methionine = spheroidene + S-adenosyl-L-homocysteine + H(+). It functions in the pathway carotenoid biosynthesis; spheroidene biosynthesis. In terms of biological role, methyltransferase that mediates the O-methylation of 1-hydroxy carotenoids. Converts hydroxyneurosporene to methoxyneurosporene or demethylspheroidene to spheroidene. Also able to produce spirilloxanthin. This Cereibacter sphaeroides (strain ATCC 17023 / DSM 158 / JCM 6121 / CCUG 31486 / LMG 2827 / NBRC 12203 / NCIMB 8253 / ATH 2.4.1.) (Rhodobacter sphaeroides) protein is Demethylspheroidene O-methyltransferase (crtF).